Here is a 33-residue protein sequence, read N- to C-terminus: Lysozyme C, spleen isozyme (33 aa).

This sequence belongs to the glycosyl hydrolase 22 family. Monomer.

The enzyme catalyses Hydrolysis of (1-&gt;4)-beta-linkages between N-acetylmuramic acid and N-acetyl-D-glucosamine residues in a peptidoglycan and between N-acetyl-D-glucosamine residues in chitodextrins.. In terms of biological role, lysozymes have primarily a bacteriolytic function; those in tissues and body fluids are associated with the monocyte-macrophage system and enhance the activity of immunoagents. The protein is Lysozyme C, spleen isozyme of Equus caballus (Horse).